The sequence spans 495 residues: MKAIMVVGTTSHAGKSFITTAICRILARQGWHVTPFKGQNMALNAYVTPTGGEIGHAQAVQAWAAKITPSVDMNPILLKPQGNMTSQVIIHGQAVGTTSAQEYYEQYFDRGWKAITSSLDCLASEYDVVVCEGAGSPAEINLKHRDLTNMRVAHHLNAATILVVDIDRGGAFAHVVGTLQLLEPEEKALIKGIVINKFRGQRSLLDSGIEWLENYTSIPVLGVIPWREIMFPSEDSLGLLDRPSYRSTTSLKISILRLPHISNFTDFDPLDAETTVNLNYLDLRGTLGYPDAVIIPGSKTTIADLIALHTTGMAQQLQDYVSAGGVILGICGGFQMLGQTVFDPDQLEGGQKAYKGLNLLPLETIITSNKIVRQRQIMSNYPYSGLPVTGYEIHQGITQLIQSYETEQTILLDQLFDDISLGFVNESQTIWGCYLHGLFDNGAWRRSWLNYLRQRRGLPSLPTGIANYREQREANLDAIADLVEEFVNLKPVFPK.

The GATase cobBQ-type domain maps to Ser250–Trp444. Residue Cys331 is the Nucleophile of the active site. Residue His436 is part of the active site.

This sequence belongs to the CobB/CobQ family. CobQ subfamily.

Its pathway is cofactor biosynthesis; adenosylcobalamin biosynthesis. Functionally, catalyzes amidations at positions B, D, E, and G on adenosylcobyrinic A,C-diamide. NH(2) groups are provided by glutamine, and one molecule of ATP is hydrogenolyzed for each amidation. This chain is Cobyric acid synthase, found in Rippkaea orientalis (strain PCC 8801 / RF-1) (Cyanothece sp. (strain PCC 8801)).